A 327-amino-acid chain; its full sequence is MLVPRVWSSVRLGLSRVLSRTLRGWPSGEGRGMDLSGIYPPVTTPFTATAEVDYGKLEENLHKLGTLPFRGFVVQGSNGEFPFLTSSERLEVVSRARQALPKDKLLLAGSGCESTQATVEMTVSMAQVGADAAMVVTPCYYRGRMSSAALIHHYTKVADLSPVPVVLYSVPANTGLDLPVDAVVTLSQHPNIVGIKDSGGDVTRIGLIVHKTRSQDFQVLAGSAGFLLASYAIGAVGGVCALANVLGSQVCQLERLCLTGQWEDAQKLQHRLIEPNTAVTRRFGIPGLKKTMDWFGYYGGPCRSPLQELSPAQEEALRLDFASNGWL.

Residues 1 to 25 constitute a mitochondrion transit peptide; it reads MLVPRVWSSVRLGLSRVLSRTLRGW. Substrate is bound at residue 77–78; it reads SN. The active-site Schiff-base intermediate with substrate is the lysine 196. 2 residues coordinate substrate: serine 198 and glycine 222.

It belongs to the DapA family. Homotetramer.

It is found in the mitochondrion. The enzyme catalyses (4S)-4-hydroxy-2-oxoglutarate = glyoxylate + pyruvate. It catalyses the reaction (4R)-4-hydroxy-2-oxoglutarate = glyoxylate + pyruvate. With respect to regulation, inhibited by divalent cations. Functionally, catalyzes the final step in the metabolic pathway of hydroxyproline. This Bos taurus (Bovine) protein is 4-hydroxy-2-oxoglutarate aldolase, mitochondrial (HOGA1).